The sequence spans 341 residues: Nicotinate-nucleotide--dimethylbenzimidazole phosphoribosyltransferase (341 aa).

Catalysis depends on Glu-310, which acts as the Proton acceptor.

Belongs to the CobT family.

The enzyme catalyses 5,6-dimethylbenzimidazole + nicotinate beta-D-ribonucleotide = alpha-ribazole 5'-phosphate + nicotinate + H(+). Its pathway is nucleoside biosynthesis; alpha-ribazole biosynthesis; alpha-ribazole from 5,6-dimethylbenzimidazole: step 1/2. In terms of biological role, catalyzes the synthesis of alpha-ribazole-5'-phosphate from nicotinate mononucleotide (NAMN) and 5,6-dimethylbenzimidazole (DMB). The polypeptide is Nicotinate-nucleotide--dimethylbenzimidazole phosphoribosyltransferase (Vibrio cholerae serotype O1 (strain ATCC 39315 / El Tor Inaba N16961)).